Here is a 143-residue protein sequence, read N- to C-terminus: Nucleoside diphosphate kinase (143 aa).

ATP contacts are provided by Lys-11, Phe-59, Arg-87, Thr-93, Arg-104, and Asn-114. Catalysis depends on His-117, which acts as the Pros-phosphohistidine intermediate.

This sequence belongs to the NDK family. Homotetramer. The cofactor is Mg(2+).

The protein localises to the cytoplasm. It catalyses the reaction dZDP + ATP = dZTP + ADP. The catalysed reaction is a 2'-deoxyribonucleoside 5'-diphosphate + ATP = a 2'-deoxyribonucleoside 5'-triphosphate + ADP. The enzyme catalyses a ribonucleoside 5'-diphosphate + ATP = a ribonucleoside 5'-triphosphate + ADP. It participates in purine metabolism. Major role in the synthesis of nucleoside triphosphates other than ATP. The ATP gamma phosphate is transferred to the NDP beta phosphate via a ping-pong mechanism, using a phosphorylated active-site intermediate. Its function is as follows. (Microbial infection) Catalyzes the phosphorylation of dZDP to dZTP, when the bacterium is infected by a phage that produces the substrate for the synthesis of dZTP (2- amino-2'-deoxyadenosine 5'-triphosphate), which is then used by the phage as a DNA polymerase substrate. This Salmonella paratyphi C (strain RKS4594) protein is Nucleoside diphosphate kinase.